The primary structure comprises 231 residues: Large ribosomal subunit protein uL1 (231 aa).

It belongs to the universal ribosomal protein uL1 family. Part of the 50S ribosomal subunit.

Its function is as follows. Binds directly to 23S rRNA. The L1 stalk is quite mobile in the ribosome, and is involved in E site tRNA release. Functionally, protein L1 is also a translational repressor protein, it controls the translation of the L11 operon by binding to its mRNA. The chain is Large ribosomal subunit protein uL1 from Chlorobaculum tepidum (strain ATCC 49652 / DSM 12025 / NBRC 103806 / TLS) (Chlorobium tepidum).